A 370-amino-acid chain; its full sequence is uncharacterized protein (370 aa).

The next 2 helical transmembrane spans lie at 11-31 and 104-124; these read LFIFLCCIMSITILSFSLVFP and IITSMTLTSLIAKVFPIPILI. The segment at 145-197 is disordered; that stretch reads HHNNNNNNNNNNNNNNNNNNNNNNNNNNNNNNNNNNNNQNNNNNDNNDNNDVL. Over residues 147–194 the composition is skewed to low complexity; that stretch reads NNNNNNNNNNNNNNNNNNNNNNNNNNNNNNNNNNNNQNNNNNDNNDNN. A run of 2 helical transmembrane segments spans residues 227-247 and 310-330; these read ITQLVVNGVSFMITLFSTFVV and LSLCSLCLDSFSIIVIIFLII.

It is found in the membrane. This is an uncharacterized protein from Dictyostelium discoideum (Social amoeba).